We begin with the raw amino-acid sequence, 71 residues long: Pro-MCH (71 aa).

An N-terminal signal peptide occupies residues 1–20; that stretch reads AKMNLSSYILILTFSLFSQG.

This sequence belongs to the melanin-concentrating hormone family.

It localises to the secreted. The protein is Pro-MCH (PMCH) of Pan paniscus (Pygmy chimpanzee).